The following is a 545-amino-acid chain: Ribulokinase (545 aa).

Belongs to the ribulokinase family.

The catalysed reaction is D-ribulose + ATP = D-ribulose 5-phosphate + ADP + H(+). It catalyses the reaction L-ribulose + ATP = L-ribulose 5-phosphate + ADP + H(+). It functions in the pathway carbohydrate degradation; L-arabinose degradation via L-ribulose; D-xylulose 5-phosphate from L-arabinose (bacterial route): step 2/3. In Staphylococcus aureus (strain MSSA476), this protein is Ribulokinase.